The primary structure comprises 804 residues: DNA mismatch repair protein MutS (804 aa).

G614–S621 lines the ATP pocket.

Belongs to the DNA mismatch repair MutS family.

This protein is involved in the repair of mismatches in DNA. It is possible that it carries out the mismatch recognition step. This protein has a weak ATPase activity. The sequence is that of DNA mismatch repair protein MutS from Ehrlichia ruminantium (strain Welgevonden).